A 299-amino-acid chain; its full sequence is Probable alpha-L-glutamate ligase (299 aa).

The 183-residue stretch at L112–E294 folds into the ATP-grasp domain. Residues K148, D185–F186, D194, and R218–N220 contribute to the ATP site. Positions 255, 267, and 269 each coordinate Mg(2+). Mn(2+) is bound by residues D255, E267, and N269.

This sequence belongs to the RimK family. The cofactor is Mg(2+). Mn(2+) is required as a cofactor.

This Histophilus somni (strain 2336) (Haemophilus somnus) protein is Probable alpha-L-glutamate ligase.